The following is a 253-amino-acid chain: tRNA pseudouridine synthase A (253 aa).

Residue Asp-53 is the Nucleophile of the active site. Tyr-111 serves as a coordination point for substrate.

The protein belongs to the tRNA pseudouridine synthase TruA family. In terms of assembly, homodimer.

The catalysed reaction is uridine(38/39/40) in tRNA = pseudouridine(38/39/40) in tRNA. Functionally, formation of pseudouridine at positions 38, 39 and 40 in the anticodon stem and loop of transfer RNAs. The polypeptide is tRNA pseudouridine synthase A (Chlorobium luteolum (strain DSM 273 / BCRC 81028 / 2530) (Pelodictyon luteolum)).